Here is a 960-residue protein sequence, read N- to C-terminus: Semaphorin-6C (960 aa).

The signal sequence occupies residues 1–23; that stretch reads MPRAPHSMPLLLLLLLSLPQAQT. Over 24 to 635 the chain is Extracellular; that stretch reads AFPQDPIPLL…ASASRSIPIP (612 aa). In terms of domain architecture, Sema spans 29-515; the sequence is PIPLLTSDLQ…FPGCIVYLSL (487 aa). N69 is a glycosylation site (N-linked (GlcNAc...) asparagine). 4 disulfide bridges follow: C110–C120, C138–C147, C261–C372, and C286–C331. N285 carries N-linked (GlcNAc...) asparagine glycosylation. An N-linked (GlcNAc...) asparagine glycan is attached at N436. Disulfide bonds link C478–C509, C518–C536, C524–C569, and C528–C544. The disordered stretch occupies residues 555 to 624; it reads VDLTGNQESM…HTQGVRRDLS (70 aa). Residues 636–656 form a helical membrane-spanning segment; the sequence is LLLACVAAAFALGASVSGLLV. Over 657-960 the chain is Cytoplasmic; the sequence is SCACRRANRR…PAPHGSHFNF (304 aa). Disordered regions lie at residues 685-725, 745-792, and 806-960; these read LARL…SPPE, ASGG…PGQE, and HGPQ…HFNF. Positions 899-909 are enriched in low complexity; sequence RVPSGGPSRYS. Over residues 922–935 the composition is skewed to basic and acidic residues; the sequence is PDGHRGRSLKRVDV. Residues 940-952 show a composition bias toward pro residues; sequence SPKPPLATPPQPA.

It belongs to the semaphorin family. As to expression, expressed in many regions of the developing nervous system, probably in neurons and their precursors, but also in nonneural tissue such as immature muscle and dermis. In adult, strong expression in the skeletal muscle and moderate expression in the brain, where cerebellum shows the highest expression. Also expressed in almost all areas of the CNS.

Its subcellular location is the cell membrane. Its function is as follows. Shows growth cone collapsing activity on dorsal root ganglion (DRG) neurons in vitro. May be a stop signal for the DRG neurons in their target areas, and possibly also for other neurons. May also be involved in the maintenance and remodeling of neuronal connections. The polypeptide is Semaphorin-6C (Sema6c) (Rattus norvegicus (Rat)).